The following is a 365-amino-acid chain: MAVALLEEWCKIMGVDVQKSLLVVDIPVDCGEPEIQTVLQEALKCVGSYRLLGKIFQKQDNTSVVLVELMEDTDMSVVPSEVQGKGGVWKVIFKTPNQDTEFLQRLNLFLEKEGQTVAGMFRALKHEGVSPATPPCTSPELLAHLTGQAMVHGQRPLLPVKYCKMRIFSGSTAAAPEEEPFEVWLEQATEIAKEWPIPEAEKKRWVAESLRGPALDLMHIVQADNPSISVGECLEAFKQVFGSTESRRTSQVKYLRTYQQEGEKISAYVLRLETLLRRAVEKRAIPRNIADQVRLEQVMAGANLGNVLWCRLQELKDQGPLPTFLQLMKVIREEEEEEDAYFEQESREEPGEREGSGCWNNSRNN.

A2 is subject to N-acetylalanine. The interval 336 to 365 (EEEDAYFEQESREEPGEREGSGCWNNSRNN) is disordered. Positions 344-355 (QESREEPGEREG) are enriched in basic and acidic residues.

Belongs to the PNMA family. As to expression, expressed in the cerebrum, cerebellum and testis.

Its subcellular location is the nucleus. The protein resides in the nucleolus. The polypeptide is Paraneoplastic antigen Ma2 homolog (Pnma2) (Mus musculus (Mouse)).